We begin with the raw amino-acid sequence, 376 residues long: MANSANTNTVPKLYRSVIEDVINDVRDIFLDDGVDEQVLMELKTLWENKLMQSRAVDGFHSEEQQLLLQVQQQHQPQQQQHHHHHHHQQAQPQQTVPQQAQTQQVLIPASQQATAPQVIVPDSKLIQHMNASNMSAAATAATLALPAGVTPVQQILTNSGQLLQVVRVANGAQYIFQPQQSVVLQQQVIPQMQPGGVQAPVIQQVLAPLPGGISPQTGVIIQPQQILFTGNKTQVIPTTVAAPTPAQAQITATGHQQPQAQPAQTQAPLVLQVDGTGDTSSEEDEDEEEDYDDDEEEDKEKDGAEDGQVEEEPLNSEDDVSDEEGQELFDTENVVVCQYDKIHRSKNKWKFHLKDGIMNLNGRDYIFSKAIGDAEW.

Ala2 bears the N-acetylalanine mark. 2 stretches are compositionally biased toward low complexity: residues 69 to 79 (QVQQQHQPQQQ) and 89 to 105 (QAQP…TQQV). Disordered stretches follow at residues 69–107 (QVQQ…QVLI), 246–265 (AQAQ…PAQT), and 274–329 (DGTG…QELF). Phosphoserine; by TAF1 occurs at positions 280, 281, 316, and 321. The span at 280-329 (SSEEDEDEEEDYDDDEEEDKEKDGAEDGQVEEEPLNSEDDVSDEEGQELF) shows a compositional bias: acidic residues. 2 residues coordinate DNA: His343 and Arg344.

The protein belongs to the TFIIA subunit 1 family. As to quaternary structure, TFIIA is a heterodimer of the large unprocessed subunit 1 and a small subunit gamma. It was originally believed to be a heterotrimer of an alpha (p35), a beta (p19) and a gamma subunit (p12). TFIIA forms a complex with TBP. Part of TBP-based Pol II pre-initiation complex (PIC), in which Pol II core assembles with general transcription factors and other specific initiation factors including GTF2E1, GTF2E2, GTF2F1, GTF2F2, TCEA1, ERCC2, ERCC3, GTF2H2, GTF2H3, GTF2H4, GTF2H5, GTF2A1, GTF2A2, GTF2B and TBP; this large multi-subunit PIC complex mediates DNA unwinding and targets Pol II core to the transcription start site where the first phosphodiester bond forms. The alpha and beta subunits are postranslationally produced from the precursor formby TASP1. The cleavage promotes proteasomal degradation.

Its subcellular location is the nucleus. In terms of biological role, TFIIA is a component of the transcription machinery of RNA polymerase II and plays an important role in transcriptional activation. TFIIA in a complex with TBP mediates transcriptional activity. This Pongo abelii (Sumatran orangutan) protein is Transcription initiation factor IIA subunit 1 (GTF2A1).